The primary structure comprises 274 residues: Undecaprenyl-diphosphatase 1 (274 aa).

A run of 7 helical transmembrane segments spans residues 47-67 (QVFLVVIQLGAILSVVLLYFN), 85-105 (VSMWIKIIISCIPATIVGIPF), 113-133 (FYNYQTVSITLISFGILFIMI), 150-170 (ITYTTAVLIGIFQLIAAVFPG), 196-216 (FFLAIPVMFGASLLKLFKFGL), 225-245 (ILFIGMLSAFIVSILAIKFLM), and 253-273 (FKAFGWYRIILGCAVLVYFLI).

The protein belongs to the UppP family.

It is found in the cell membrane. It carries out the reaction di-trans,octa-cis-undecaprenyl diphosphate + H2O = di-trans,octa-cis-undecaprenyl phosphate + phosphate + H(+). Catalyzes the dephosphorylation of undecaprenyl diphosphate (UPP). Confers resistance to bacitracin. This chain is Undecaprenyl-diphosphatase 1, found in Clostridium acetobutylicum (strain ATCC 824 / DSM 792 / JCM 1419 / IAM 19013 / LMG 5710 / NBRC 13948 / NRRL B-527 / VKM B-1787 / 2291 / W).